The following is a 292-amino-acid chain: Cytidine deaminase (292 aa).

2 consecutive CMP/dCMP-type deaminase domains span residues 47-167 and 186-292; these read TPLK…FGPK and DHQD…YYSL. Residue 88–90 coordinates substrate; the sequence is NQE. Zn(2+) is bound at residue His-101. Catalysis depends on Glu-103, which acts as the Proton donor. 2 residues coordinate Zn(2+): Cys-128 and Cys-131.

This sequence belongs to the cytidine and deoxycytidylate deaminase family. As to quaternary structure, homodimer. Zn(2+) serves as cofactor.

The catalysed reaction is cytidine + H2O + H(+) = uridine + NH4(+). It carries out the reaction 2'-deoxycytidine + H2O + H(+) = 2'-deoxyuridine + NH4(+). Functionally, this enzyme scavenges exogenous and endogenous cytidine and 2'-deoxycytidine for UMP synthesis. The chain is Cytidine deaminase from Haemophilus influenzae (strain 86-028NP).